The chain runs to 667 residues: UvrABC system protein B (667 aa).

The region spanning 31-414 (KNFEAGAKAQ…EAEQTDIQVD (384 aa)) is the Helicase ATP-binding domain. ATP is bound at residue 44-51 (GATGTGKT). The Beta-hairpin signature appears at 97–120 (YYDYYQPEAYVPSSDTYIEKDSSI). Residues 435–597 (QIDDLVGEIN…ITPKTIIKPI (163 aa)) form the Helicase C-terminal domain. The 36-residue stretch at 630-665 (LEMVERLSEQMRLAAKKLDFEQAATLRDTILELKSE) folds into the UVR domain.

This sequence belongs to the UvrB family. Forms a heterotetramer with UvrA during the search for lesions. Interacts with UvrC in an incision complex.

The protein localises to the cytoplasm. Its function is as follows. The UvrABC repair system catalyzes the recognition and processing of DNA lesions. A damage recognition complex composed of 2 UvrA and 2 UvrB subunits scans DNA for abnormalities. Upon binding of the UvrA(2)B(2) complex to a putative damaged site, the DNA wraps around one UvrB monomer. DNA wrap is dependent on ATP binding by UvrB and probably causes local melting of the DNA helix, facilitating insertion of UvrB beta-hairpin between the DNA strands. Then UvrB probes one DNA strand for the presence of a lesion. If a lesion is found the UvrA subunits dissociate and the UvrB-DNA preincision complex is formed. This complex is subsequently bound by UvrC and the second UvrB is released. If no lesion is found, the DNA wraps around the other UvrB subunit that will check the other stand for damage. This Latilactobacillus sakei subsp. sakei (strain 23K) (Lactobacillus sakei subsp. sakei) protein is UvrABC system protein B.